A 429-amino-acid polypeptide reads, in one-letter code: Chaperone SurA (429 aa).

An N-terminal signal peptide occupies residues 1–19 (MKKTLLALLIASVMQSALA). 2 PpiC domains span residues 172–273 (RTEY…KLVD) and 283–381 (VEQY…LVEG).

The protein resides in the periplasm. The enzyme catalyses [protein]-peptidylproline (omega=180) = [protein]-peptidylproline (omega=0). Chaperone involved in the correct folding and assembly of outer membrane proteins. Recognizes specific patterns of aromatic residues and the orientation of their side chains, which are found more frequently in integral outer membrane proteins. May act in both early periplasmic and late outer membrane-associated steps of protein maturation. The polypeptide is Chaperone SurA (Chromobacterium violaceum (strain ATCC 12472 / DSM 30191 / JCM 1249 / CCUG 213 / NBRC 12614 / NCIMB 9131 / NCTC 9757 / MK)).